The following is a 1074-amino-acid chain: Semaphorin-5A (1074 aa).

A signal peptide spans 1–22; sequence MKGTCVIAWLFSSLGLWRLAHP. Residues 23–968 are Extracellular-facing; that stretch reads EAQGTTQCQR…EEKRCGEFNM (946 aa). In terms of domain architecture, Sema spans 35–484; it reads HPVISYKEIG…LREHVVKIPL (450 aa). 2 cysteine pairs are disulfide-bonded: Cys104–Cys114 and Cys131–Cys140. Residues Asn142, Asn168, Asn227, and Asn277 are each glycosylated (N-linked (GlcNAc...) asparagine). Intrachain disulfides connect Cys254/Cys357 and Cys278/Cys320. Residues Asn323, Asn367, and Asn437 are each glycosylated (N-linked (GlcNAc...) asparagine). 2 cysteine pairs are disulfide-bonded: Cys487–Cys504 and Cys496–Cys513. Residues Asn536 and Asn591 are each glycosylated (N-linked (GlcNAc...) asparagine). 7 TSP type-1 domains span residues 540-593, 595-651, 653-702, 707-765, 784-839, 841-896, and 897-944; these read DGHF…ANCS, NGGW…LLCP, HMFW…NPCP, TTPW…GCST, NGAW…LPCP, DGVW…QPCP, and ESWS…VFDS. Intrachain disulfides connect Cys607-Cys644, Cys611-Cys650, Cys622-Cys634, Cys665-Cys696, Cys669-Cys701, and Cys680-Cys686. Asn717 carries N-linked (GlcNAc...) asparagine glycosylation. 6 disulfide bridges follow: Cys796–Cys833, Cys800–Cys838, Cys811–Cys823, Cys853–Cys890, Cys857–Cys895, and Cys868–Cys880. A glycan (N-linked (GlcNAc...) asparagine) is linked at Asn933. Residues 969 to 989 form a helical membrane-spanning segment; that stretch reads FHMIAVGLSSSILGCLLTLLV. Over 990 to 1074 the chain is Cytoplasmic; that stretch reads YTYCQRYQQQ…FTDLNNYDEY (85 aa).

The protein belongs to the semaphorin family. As to quaternary structure, binds PLXNB3.

Its subcellular location is the membrane. Functionally, bifunctional axonal guidance cue regulated by sulfated proteoglycans; attractive effects result from interactions with heparan sulfate proteoglycans (HSPGs), while the inhibitory effects depend on interactions with chondroitin sulfate proteoglycans (CSPGs). Ligand for receptor PLXNB3. In glioma cells, SEMA5A stimulation of PLXNB3 results in the disassembly of F-actin stress fibers, disruption of focal adhesions and cellular collapse as well as inhibition of cell migration and invasion through ARHGDIA-mediated inactivation of RAC1. May promote angiogenesis by increasing endothelial cell proliferation and migration and inhibiting apoptosis. This Homo sapiens (Human) protein is Semaphorin-5A (SEMA5A).